Reading from the N-terminus, the 660-residue chain is Putative ABC transporter ATP-binding MG390 homolog (660 aa).

Residues 6 to 126 form the Peptidase C39 domain; sequence QEQPNECGIC…KQWTGYAATV (121 aa). Cys-12 is an active-site residue. The next 6 helical transmembrane spans lie at 150-170, 188-208, 265-285, 290-310, 379-399, and 402-422; these read LIIF…LLAT, IVVF…LYAL, HIPN…LIGI, FLWI…YDFF, SFAQ…GIIE, and YTLA…AYAT. Positions 464-660 constitute an ABC transporter domain; that stretch reads INLNNCSITL…INLSPYLQQT (197 aa). 494–501 contributes to the ATP binding site; it reads GENGSGKS.

The protein belongs to the ABC transporter superfamily.

Its subcellular location is the cell membrane. This Mycoplasma pneumoniae (strain ATCC 29342 / M129 / Subtype 1) (Mycoplasmoides pneumoniae) protein is Putative ABC transporter ATP-binding MG390 homolog.